Consider the following 439-residue polypeptide: NAD kinase (439 aa).

A phosphoserine mark is found at Ser-46, Ser-48, Ser-50, Ser-55, and Ser-64.

The protein belongs to the NAD kinase family. A divalent metal cation is required as a cofactor.

The enzyme catalyses NAD(+) + ATP = ADP + NADP(+) + H(+). In Mus musculus (Mouse), this protein is NAD kinase (Nadk).